Reading from the N-terminus, the 440-residue chain is Thymidine phosphorylase (440 aa).

Belongs to the thymidine/pyrimidine-nucleoside phosphorylase family. As to quaternary structure, homodimer.

The enzyme catalyses thymidine + phosphate = 2-deoxy-alpha-D-ribose 1-phosphate + thymine. The protein operates within pyrimidine metabolism; dTMP biosynthesis via salvage pathway; dTMP from thymine: step 1/2. Functionally, the enzymes which catalyze the reversible phosphorolysis of pyrimidine nucleosides are involved in the degradation of these compounds and in their utilization as carbon and energy sources, or in the rescue of pyrimidine bases for nucleotide synthesis. This Escherichia coli O139:H28 (strain E24377A / ETEC) protein is Thymidine phosphorylase.